We begin with the raw amino-acid sequence, 330 residues long: Serine/threonine-protein phosphatase beta isoform (330 aa).

Mn(2+)-binding residues include D63, H65, D91, and N123. H124 functions as the Proton donor in the catalytic mechanism. Positions 172 and 247 each coordinate Mn(2+). Residues 308–319 (GMNSSRPTTPQR) are compositionally biased toward polar residues. Residues 308-330 (GMNSSRPTTPQRSAPMLATNKKK) form a disordered region. Residues T315 and T316 each carry the phosphothreonine modification.

This sequence belongs to the PPP phosphatase family. PP-1 subfamily. As to quaternary structure, interacts with Nop17l. Interacts with uri; uri inhibits flw phosphatase activity. Requires Mn(2+) as cofactor.

It catalyses the reaction O-phospho-L-seryl-[protein] + H2O = L-seryl-[protein] + phosphate. The catalysed reaction is O-phospho-L-threonyl-[protein] + H2O = L-threonyl-[protein] + phosphate. Functionally, required for cell adhesion in non-muscle tissues and in maintenance of muscle attachment. Vital for larval development. This Drosophila melanogaster (Fruit fly) protein is Serine/threonine-protein phosphatase beta isoform (flw).